Reading from the N-terminus, the 316-residue chain is L-lactate dehydrogenase (316 aa).

34-39 is an NAD(+) binding site; the sequence is DVVEGV. Positions 89, 121, and 152 each coordinate substrate. Asn-121 lines the NAD(+) pocket. His-172 (proton acceptor) is an active-site residue.

This sequence belongs to the LDH/MDH superfamily. LDH family. In terms of assembly, homotetramer.

It carries out the reaction (S)-lactate + NAD(+) = pyruvate + NADH + H(+). The protein operates within fermentation; pyruvate fermentation to lactate; (S)-lactate from pyruvate: step 1/1. This is L-lactate dehydrogenase from Botryococcus braunii (Green alga).